The primary structure comprises 201 residues: Peptide deformylase (201 aa).

Fe cation contacts are provided by cysteine 114 and histidine 156. The active site involves glutamate 157. Histidine 160 is a Fe cation binding site.

The protein belongs to the polypeptide deformylase family. It depends on Fe(2+) as a cofactor.

It carries out the reaction N-terminal N-formyl-L-methionyl-[peptide] + H2O = N-terminal L-methionyl-[peptide] + formate. Removes the formyl group from the N-terminal Met of newly synthesized proteins. Requires at least a dipeptide for an efficient rate of reaction. N-terminal L-methionine is a prerequisite for activity but the enzyme has broad specificity at other positions. This chain is Peptide deformylase, found in Tropheryma whipplei (strain TW08/27) (Whipple's bacillus).